A 108-amino-acid chain; its full sequence is Nucleoid-associated protein BARBAKC583_1239 (108 aa).

Belongs to the YbaB/EbfC family. As to quaternary structure, homodimer.

It localises to the cytoplasm. The protein resides in the nucleoid. Binds to DNA and alters its conformation. May be involved in regulation of gene expression, nucleoid organization and DNA protection. The polypeptide is Nucleoid-associated protein BARBAKC583_1239 (Bartonella bacilliformis (strain ATCC 35685 / KC583 / Herrer 020/F12,63)).